The chain runs to 767 residues: Protein transport protein Sec23A (767 aa).

Positions 61, 66, 85, and 88 each coordinate Zn(2+). One copy of the Gelsolin-like repeat lies at 634-720; that stretch reads PEPVLLDSSS…EHGGSQARFL (87 aa).

Belongs to the SEC23/SEC24 family. SEC23 subfamily. As to quaternary structure, COPII is composed of at least five proteins: the Sec23/24 complex, the Sec13/31 complex and Sar1.

The protein resides in the cytoplasmic vesicle. It is found in the COPII-coated vesicle membrane. It localises to the endoplasmic reticulum membrane. Its subcellular location is the cytoplasm. The protein localises to the cytosol. Component of the coat protein complex II (COPII) which promotes the formation of transport vesicles from the endoplasmic reticulum (ER). The coat has two main functions, the physical deformation of the endoplasmic reticulum membrane into vesicles and the selection of cargo molecules for their transport to the Golgi complex. The protein is Protein transport protein Sec23A of Gallus gallus (Chicken).